We begin with the raw amino-acid sequence, 336 residues long: Fructose-1,6-bisphosphatase class 1 (336 aa).

Residues Glu-92, Asp-115, Leu-117, and Asp-118 each contribute to the Mg(2+) site. Residues 118-121 (DGSS), Asn-211, Tyr-244, 262-264 (YLY), and Lys-274 each bind substrate. Glu-280 provides a ligand contact to Mg(2+).

This sequence belongs to the FBPase class 1 family. In terms of assembly, homotetramer. Mg(2+) is required as a cofactor.

It is found in the cytoplasm. It catalyses the reaction beta-D-fructose 1,6-bisphosphate + H2O = beta-D-fructose 6-phosphate + phosphate. It participates in carbohydrate biosynthesis; gluconeogenesis. The protein is Fructose-1,6-bisphosphatase class 1 of Hahella chejuensis (strain KCTC 2396).